The sequence spans 249 residues: O-methyltransferase adaD (249 aa).

A compositionally biased stretch (low complexity) spans 1-15 (MSSVTLTTTTTTTST). The tract at residues 1 to 26 (MSSVTLTTTTTTTSTPPKPTPKDEPQ) is disordered.

It belongs to the methyltransferase superfamily.

It catalyses the reaction 2-acetyl-3,4a,8,10,11,12a-hexahydroxy-1,4,4a,5,12,12a-hexahydrotetracene-1,12-dione + S-adenosyl-L-methionine = TAN-1612 + S-adenosyl-L-homocysteine + H(+). Its pathway is secondary metabolite biosynthesis. O-methyltransferase; part of the gene cluster that mediates the biosynthesis of the linear tetracyclic TAN-1612 neuropeptide Y receptor antagonist. The decaketide backbone of TAN-1612 is synthesized by the non-reducing polyketide synthase adaA via condensation of one acetyl-CoA starter unit with 9 malonyl-CoA units. The FAD-dependent monooxygenase adaC then performs hydroxylation at C2 while the polaketide chain is still attached to the NRPKS adaA. The alpha-hydroxylation step at C2 appears to be crucial for the following C18-C1 Claisen cyclization and release of the C9-hydroxyl version of TAN-1612 from the NRPKS adaA, two steps performed by the lactamase-like protein adaB. Finally, the O-methyltransferase adaD performs the C9 O-methylation to complete the biosynthesis of TAN-1612. The polypeptide is O-methyltransferase adaD (Aspergillus niger).